We begin with the raw amino-acid sequence, 180 residues long: Large ribosomal subunit protein uL5 (180 aa).

Belongs to the universal ribosomal protein uL5 family. Part of the 50S ribosomal subunit; part of the 5S rRNA/L5/L18/L25 subcomplex. Contacts the 5S rRNA and the P site tRNA. Forms a bridge to the 30S subunit in the 70S ribosome.

In terms of biological role, this is one of the proteins that bind and probably mediate the attachment of the 5S RNA into the large ribosomal subunit, where it forms part of the central protuberance. In the 70S ribosome it contacts protein S13 of the 30S subunit (bridge B1b), connecting the 2 subunits; this bridge is implicated in subunit movement. Contacts the P site tRNA; the 5S rRNA and some of its associated proteins might help stabilize positioning of ribosome-bound tRNAs. The chain is Large ribosomal subunit protein uL5 from Streptococcus uberis (strain ATCC BAA-854 / 0140J).